The sequence spans 485 residues: Aspartyl/glutamyl-tRNA(Asn/Gln) amidotransferase subunit B (485 aa).

Belongs to the GatB/GatE family. GatB subfamily. As to quaternary structure, heterotrimer of A, B and C subunits.

The catalysed reaction is L-glutamyl-tRNA(Gln) + L-glutamine + ATP + H2O = L-glutaminyl-tRNA(Gln) + L-glutamate + ADP + phosphate + H(+). It carries out the reaction L-aspartyl-tRNA(Asn) + L-glutamine + ATP + H2O = L-asparaginyl-tRNA(Asn) + L-glutamate + ADP + phosphate + 2 H(+). Its function is as follows. Allows the formation of correctly charged Asn-tRNA(Asn) or Gln-tRNA(Gln) through the transamidation of misacylated Asp-tRNA(Asn) or Glu-tRNA(Gln) in organisms which lack either or both of asparaginyl-tRNA or glutaminyl-tRNA synthetases. The reaction takes place in the presence of glutamine and ATP through an activated phospho-Asp-tRNA(Asn) or phospho-Glu-tRNA(Gln). In Borrelia turicatae (strain 91E135), this protein is Aspartyl/glutamyl-tRNA(Asn/Gln) amidotransferase subunit B.